A 219-amino-acid polypeptide reads, in one-letter code: uncharacterized protein (219 aa).

The N-terminal stretch at 1-26 (MNDRGVPNSRTGPSLLALLPAANSYA) is a signal peptide. 2 disordered regions span residues 36 to 57 (AVGVGGGSYKSPTRGSPGTRGG) and 88 to 219 (SGLG…GLCE). Residues 127–173 (LSPPSALGSSPAGRGRPAPAIAAAKSSPLSASAAPGRCGARPRAPSR) show a composition bias toward low complexity. Over residues 176 to 202 (RERRPRGNPRAPLRRGARGRRRSHTRG) the composition is skewed to basic residues.

This is an uncharacterized protein from Gallid herpesvirus 2 (strain Chicken/Md5/ATCC VR-987) (GaHV-2).